The chain runs to 359 residues: uncharacterized protein (359 aa).

3 disordered regions span residues 90 to 117 (QESP…PSRK), 132 to 161 (IKKE…GMTS), and 235 to 359 (TSME…THRR). Over residues 151 to 161 (TPGSCSSGMTS) the composition is skewed to polar residues. The segment covering 245 to 259 (KPPTVKSPPTVKLPP) has biased composition (low complexity). The segment covering 286–299 (EENKEVPKEAEHKP) has biased composition (basic and acidic residues).

This is an uncharacterized protein from Homo sapiens (Human).